Consider the following 602-residue polypeptide: Major facilitator superfamily multidrug transporter mfsB (602 aa).

The next 12 helical transmembrane spans lie at 29-49 (FVLALCRICEPIAFMSIFPYV), 67-87 (LYAGLITSSFTFAEFSAGMFW), 98-118 (PVLIMGLIGTAISMIVFGFAP), 128-148 (ALGGLLNGNIGVLQTTVAEIV), 160-180 (IMPFVWCLGSIIGPAMGGALA), 201-221 (FLLPNLVCVVVLVFGVIVGFL), 329-349 (IVAYGILAYHSVSFDQLIPVF), 378-398 (FMLAVQGVYSMIAQLWLFPFV), 411-431 (VLLVWPPLYMLVPYLVLLPSI), 439-459 (LALISKITLHVIAFPSTAILL), 468-486 (VLGSINGAAASTASLSRAL), and 505-525 (IIAWWACGLVCVTGTIQSFWM). The interval 527 to 602 (ESEPRRDSEK…RSNPLAFAED (76 aa)) is disordered. A compositionally biased stretch (basic and acidic residues) spans 528 to 538 (SEPRRDSEKAG).

It belongs to the major facilitator superfamily.

It is found in the membrane. Its function is as follows. Major facilitator superfamily transporter that may be involved in A.fumigatus adaptation to azoles such as vorizonazole. The chain is Major facilitator superfamily multidrug transporter mfsB from Aspergillus fumigatus (strain ATCC MYA-4609 / CBS 101355 / FGSC A1100 / Af293) (Neosartorya fumigata).